Consider the following 209-residue polypeptide: MSKKKRTASSTRWLKEHFDDKYVQQAQKQGLRSRAVFKIDEIQQKDKLIKQGMTVVDLGAAPGGWSQFCVEQVGPHGRVIACDILPMDPIAGVDFLQGDFREEAVLSALLGRVGEQKVDIILSDMAPNMSGTPAVDQPRSMYLVELALEMCKQVLAAKGSFVVKVFQGAGFEEYLKEVRSLFSVVKIRKPDSSRSRSREVYIVATGFKL.

Positions 63, 65, 83, 99, and 124 each coordinate S-adenosyl-L-methionine. Lys-164 functions as the Proton acceptor in the catalytic mechanism.

This sequence belongs to the class I-like SAM-binding methyltransferase superfamily. RNA methyltransferase RlmE family.

The protein resides in the cytoplasm. The enzyme catalyses uridine(2552) in 23S rRNA + S-adenosyl-L-methionine = 2'-O-methyluridine(2552) in 23S rRNA + S-adenosyl-L-homocysteine + H(+). Functionally, specifically methylates the uridine in position 2552 of 23S rRNA at the 2'-O position of the ribose in the fully assembled 50S ribosomal subunit. The sequence is that of Ribosomal RNA large subunit methyltransferase E from Tolumonas auensis (strain DSM 9187 / NBRC 110442 / TA 4).